The following is a 432-amino-acid chain: Adenylosuccinate synthetase (432 aa).

GTP-binding positions include 13-19 (GDEGKGK) and 41-43 (GHT). Catalysis depends on Asp-14, which acts as the Proton acceptor. Positions 14 and 41 each coordinate Mg(2+). Residues 14–17 (DEGK), 39–42 (NAGH), Thr-130, Arg-144, Gln-225, Thr-240, and Arg-304 contribute to the IMP site. Residue His-42 is the Proton donor of the active site. Residue 300 to 306 (AVTGRPR) coordinates substrate. GTP-binding positions include Arg-306, 332–334 (KLD), and 415–417 (STG).

Belongs to the adenylosuccinate synthetase family. In terms of assembly, homodimer. Requires Mg(2+) as cofactor.

The protein localises to the cytoplasm. The enzyme catalyses IMP + L-aspartate + GTP = N(6)-(1,2-dicarboxyethyl)-AMP + GDP + phosphate + 2 H(+). It participates in purine metabolism; AMP biosynthesis via de novo pathway; AMP from IMP: step 1/2. Plays an important role in the de novo pathway of purine nucleotide biosynthesis. Catalyzes the first committed step in the biosynthesis of AMP from IMP. This is Adenylosuccinate synthetase from Histophilus somni (strain 129Pt) (Haemophilus somnus).